Here is an 896-residue protein sequence, read N- to C-terminus: MAAAGPRRSVRGAVCLHLLLTLVIFSRAGEACKKVILNVPSKLEADKIIGRVNLEECFRSADLIRSSDPDFRVLNDGSVYTARAVALSDKKRSFTIWLSDKRKQTQKEVTVLLEHQKKVSKTRHTRETVLRRAKRRWAPIPCSMQENSLGPFPLFLQQVESDAAQNYTVFYSISGRGVDKEPLNLFYIERDTGNLFCTRPVDREEYDVFDLIAYASTADGYSADLPLPLPIRVEDENDNHPVFTEAIYNFEVLESSRPGTTVGVVCATDRDEPDTMHTRLKYSILQQTPRSPGLFSVHPSTGVITTVSHYLDREVVDKYSLIMKVQDMDGQFFGLIGTSTCIITVTDSNDNAPTFRQNAYEAFVEENAFNVEILRIPIEDKDLINTANWRVNFTILKGNENGHFKISTDKETNEGVLSVVKPLNYEENRQVNLEIGVNNEAPFARDIPRVTALNRALVTVHVRDLDEGPECTPAAQYVRIKENLAVGSKINGYKAYDPENRNGNGLRYKKLHDPKGWITIDEISGSIITSKILDREVETPKNELYNITVLAIDKDDRSCTGTLAVNIEDVNDNPPEILQEYVVICKPKMGYTDILAVDPDEPVHGAPFYFSLPNTSPEISRLWSLTKVNDTAARLSYQKNAGFQEYTIPITVKDRAGQAATKLLRVNLCECTHPTQCRATSRSTGVILGKWAILAILLGIALLFSVLLTLVCGVFGATKGKRFPEDLAQQNLIISNTEAPGDDRVCSANGFMTQTTNNSSQGFCGTMGSGMKNGGQETIEMMKGGNQTLESCRGAGHHHTLDSCRGGHTEVDNCRYTYSEWHSFTQPRLGEKLHRCNQNEDRMPSQDYVLTYNYEGRGSPAGSVGCCSEKQEEDGLDFLNNLEPKFITLAEACTKR.

The N-terminal stretch at 1-27 (MAAAGPRRSVRGAVCLHLLLTLVIFSR) is a signal peptide. Residues 28-135 (AGEACKKVIL…RETVLRRAKR (108 aa)) constitute a propeptide that is removed on maturation. 5 consecutive Cadherin domains span residues 136 to 243 (RWAP…HPVF), 244 to 355 (TEAI…APTF), 356 to 471 (RQNA…GPEC), 472 to 579 (TPAA…EILQ), and 580 to 690 (EYVV…ILGK). Residues 136 to 690 (RWAPIPCSMQ…SRSTGVILGK (555 aa)) lie on the Extracellular side of the membrane. An N-linked (GlcNAc...) asparagine glycan is attached at asparagine 166. Residues asparagine 392, asparagine 546, and asparagine 629 are each glycosylated (N-linked (GlcNAc...) asparagine). The helical transmembrane segment at 691 to 711 (WAILAILLGIALLFSVLLTLV) threads the bilayer. Residues 712-896 (CGVFGATKGK…ITLAEACTKR (185 aa)) are Cytoplasmic-facing.

As to quaternary structure, may form homodimers. Interacts with DSG1; there is evidence to suggest that the interaction promotes cell-cell adhesion of keratinocytes. In terms of tissue distribution, expressed throughout the basal and spinous layer of the epidermis with weak expression in the granular layer (at protein level). Also expressed in the buccal mucosa, esophagus and cervix (at protein level).

The protein resides in the cell membrane. It localises to the cell junction. It is found in the desmosome. Its subcellular location is the cytoplasm. Functionally, a component of desmosome cell-cell junctions which are required for positive regulation of cellular adhesion. Required for cell-cell adhesion in the epidermis, as a result required for the maintenance of the dermal cohesion and the dermal barrier function. Required for cell-cell adhesion of epithelial cell layers surrounding the telogen hair club, as a result plays an important role in telogen hair shaft anchorage. Essential for successful completion of embryo compaction and embryo development. The chain is Desmocollin-3 (DSC3) from Homo sapiens (Human).